The chain runs to 93 residues: Integration host factor subunit beta (93 aa).

This sequence belongs to the bacterial histone-like protein family. As to quaternary structure, heterodimer of an alpha and a beta chain.

Its function is as follows. This protein is one of the two subunits of integration host factor, a specific DNA-binding protein that functions in genetic recombination as well as in transcriptional and translational control. The sequence is that of Integration host factor subunit beta from Vibrio vulnificus (strain YJ016).